The primary structure comprises 34 residues: Photosystem II reaction center protein Psb30 (34 aa).

The helical transmembrane segment at 5-25 (VLAQLTVLAFVIAVGPITLIW) threads the bilayer.

Belongs to the Psb30/Ycf12 family. As to quaternary structure, PSII is composed of 1 copy each of membrane proteins PsbA, PsbB, PsbC, PsbD, PsbE, PsbF, PsbH, PsbI, PsbJ, PsbK, PsbL, PsbM, PsbT, PsbX, PsbY, PsbZ, Psb30/Ycf12, peripheral proteins of the oxygen-evolving complex and a large number of cofactors. It forms dimeric complexes.

Its subcellular location is the plastid. It localises to the chloroplast thylakoid membrane. Its function is as follows. A core subunit of photosystem II (PSII), probably helps stabilize the reaction center. This Cyanidioschyzon merolae (strain NIES-3377 / 10D) (Unicellular red alga) protein is Photosystem II reaction center protein Psb30.